Consider the following 424-residue polypeptide: Spindle pole component BBP1 (424 aa).

Phosphoserine is present on Ser29. Residues 34 to 48 (YKDQEERRDRSRYAQ) are compositionally biased toward basic and acidic residues. Residues 34-76 (YKDQEERRDRSRYAQDDTNFSMKFGNDSNRRSTNLSRSNSWSG) form a disordered region. Residues 64-75 (RSTNLSRSNSWS) are compositionally biased toward low complexity. Residues Ser73 and Ser115 each carry the phosphoserine modification. Positions 229–355 (QMDLNSRDLE…KDMQRDNYES (127 aa)) form a coiled coil.

It belongs to the BBP1 family. Homodimer. Interacts with KAR1, MPS2 and SPC29.

It is found in the cytoplasm. The protein resides in the cytoskeleton. Its subcellular location is the microtubule organizing center. The protein localises to the spindle pole body. Component of the spindle pole body (SPB) required for insertion of the nascent SPB into the nuclear envelope and for the proper execution of spindle pole body (SPB) duplication. Connects the central plaque of the SPB with the half-bridge. Required for proper localization of CDC5 at the SPB and for proper M-phase progression. This Saccharomyces cerevisiae (strain FostersO) (Baker's yeast) protein is Spindle pole component BBP1 (BBP1).